Consider the following 429-residue polypeptide: Glutamate-1-semialdehyde 2,1-aminomutase 2 (429 aa).

K268 bears the N6-(pyridoxal phosphate)lysine mark.

This sequence belongs to the class-III pyridoxal-phosphate-dependent aminotransferase family. HemL subfamily. Homodimer. Requires pyridoxal 5'-phosphate as cofactor.

Its subcellular location is the cytoplasm. The enzyme catalyses (S)-4-amino-5-oxopentanoate = 5-aminolevulinate. It functions in the pathway porphyrin-containing compound metabolism; protoporphyrin-IX biosynthesis; 5-aminolevulinate from L-glutamyl-tRNA(Glu): step 2/2. This is Glutamate-1-semialdehyde 2,1-aminomutase 2 from Geobacillus kaustophilus (strain HTA426).